The following is a 95-amino-acid chain: Aspartyl/glutamyl-tRNA(Asn/Gln) amidotransferase subunit C (95 aa).

It belongs to the GatC family. As to quaternary structure, heterotrimer of A, B and C subunits.

The enzyme catalyses L-glutamyl-tRNA(Gln) + L-glutamine + ATP + H2O = L-glutaminyl-tRNA(Gln) + L-glutamate + ADP + phosphate + H(+). The catalysed reaction is L-aspartyl-tRNA(Asn) + L-glutamine + ATP + H2O = L-asparaginyl-tRNA(Asn) + L-glutamate + ADP + phosphate + 2 H(+). In terms of biological role, allows the formation of correctly charged Asn-tRNA(Asn) or Gln-tRNA(Gln) through the transamidation of misacylated Asp-tRNA(Asn) or Glu-tRNA(Gln) in organisms which lack either or both of asparaginyl-tRNA or glutaminyl-tRNA synthetases. The reaction takes place in the presence of glutamine and ATP through an activated phospho-Asp-tRNA(Asn) or phospho-Glu-tRNA(Gln). This is Aspartyl/glutamyl-tRNA(Asn/Gln) amidotransferase subunit C from Pelagibacter ubique (strain HTCC1062).